The primary structure comprises 253 residues: Triosephosphate isomerase (253 aa).

8–10 serves as a coordination point for substrate; that stretch reads NWK. H93 (electrophile) is an active-site residue. The active-site Proton acceptor is E165. Substrate is bound by residues G171, S210, and 231–232; that span reads GG.

This sequence belongs to the triosephosphate isomerase family. As to quaternary structure, homodimer.

The protein localises to the cytoplasm. It carries out the reaction D-glyceraldehyde 3-phosphate = dihydroxyacetone phosphate. It participates in carbohydrate biosynthesis; gluconeogenesis. The protein operates within carbohydrate degradation; glycolysis; D-glyceraldehyde 3-phosphate from glycerone phosphate: step 1/1. In terms of biological role, involved in the gluconeogenesis. Catalyzes stereospecifically the conversion of dihydroxyacetone phosphate (DHAP) to D-glyceraldehyde-3-phosphate (G3P). This is Triosephosphate isomerase from Francisella tularensis subsp. novicida (strain U112).